Reading from the N-terminus, the 634-residue chain is MDNSSDEESEISESEIDVYYEKPYEKLMNGDYKVKVKDTFRCPFCAGKKKQHYKYKELLAHASGVAKGSASRSAKQKANHFALAKYMENELAGDADVPRPQIPSSSTEQSQAVVDDIYVWPWMGIVINPVRRTDNKNVLLDSAYWLKKLARFNPLEVKTLWLDQESVVAVIPQFNSGWSGFKSVTELEKEYEIRGCGRKDWIDKRGDWRSKAYGWCARADDYNSQGSIAEYLSKVGKLRSFSDITKEEIQNKSIVVDDLANKIAMTNEDLNKLQYMNNEKTLSLRRVLIEKDELDRVYKQETKKMQELSREKINRIFREKERLTNELEAKMNNLKIWSKQLDKKQALTELERQKLDEDKKKSDVMNSSLQLASLEQKKTDDRVLRLVDEHKRKKEETLNKILQLEKELDSKQKLQMEIQELKGKLKVMKHEDEDDEGIKKKMKKMKEELEEKCSELQDLEDTNSALMVKERKSNDEIVEARKFLITELRELVSDRNIIRVKRMGELEEKPFMTACRQRCTVEEEAQVQYAMLCSKWQEKVKDSAWQPFKHVGTGDRKKEVVDEEDEEIKKLREEWGEEVKNAVKTALEELNEFNPSGRYSVPELWNSKQGRKATLKEVIDYITQQVKTLKRRRA.

A coiled-coil region spans residues 254-469; it reads IVVDDLANKI…EDTNSALMVK (216 aa).

Its function is as follows. Acts in association with FDM3 and FDM4 for RNA-directed DNA methylation (RdDM). This is Factor of DNA methylation 5 from Arabidopsis thaliana (Mouse-ear cress).